The following is a 267-amino-acid chain: Phosphatidylglycerol--prolipoprotein diacylglyceryl transferase (267 aa).

The next 4 helical transmembrane spans lie at 20–40, 57–77, 88–108, and 117–137; these read LEIRWYAICILLGLILGVYLA, FILIAFPLSILGARIYYVAFS, IFAIWNGGIAIYGGLITGAIV, and FINTLDFLDIVAPSVMIAQAI. Residue Arg-139 participates in a 1,2-diacyl-sn-glycero-3-phospho-(1'-sn-glycerol) binding. Transmembrane regions (helical) follow at residues 175–195, 205–225, and 235–255; these read QPTFLFESLWNLLGFGLVCVL, GEITAFYLVWYGCGRLLIEGL, and IRVSQWLSGVLILVGIIMVVL.

The protein belongs to the Lgt family.

It is found in the cell membrane. It carries out the reaction L-cysteinyl-[prolipoprotein] + a 1,2-diacyl-sn-glycero-3-phospho-(1'-sn-glycerol) = an S-1,2-diacyl-sn-glyceryl-L-cysteinyl-[prolipoprotein] + sn-glycerol 1-phosphate + H(+). It functions in the pathway protein modification; lipoprotein biosynthesis (diacylglyceryl transfer). In terms of biological role, catalyzes the transfer of the diacylglyceryl group from phosphatidylglycerol to the sulfhydryl group of the N-terminal cysteine of a prolipoprotein, the first step in the formation of mature lipoproteins. This is Phosphatidylglycerol--prolipoprotein diacylglyceryl transferase from Streptococcus suis (strain 98HAH33).